Reading from the N-terminus, the 147-residue chain is MELILKQDVQNLGFKDDIVSVKAGYGRNYLIPQGFAHMATSSAKKVLAENLKQRAHKEAKVVADAKTLGDALKAIEIKISAKAGGEKLFGSITNIDIAEALAKGGQSIDRKFITSGIVKRTGKYNASVRLHRDVIVELAYEIVAEQA.

This sequence belongs to the bacterial ribosomal protein bL9 family.

Its function is as follows. Binds to the 23S rRNA. The protein is Large ribosomal subunit protein bL9 of Flavobacterium psychrophilum (strain ATCC 49511 / DSM 21280 / CIP 103535 / JIP02/86).